We begin with the raw amino-acid sequence, 1174 residues long: Carboxylic acid reductase (1174 aa).

Residues His-297, Ser-392, 413–414 (EG), Thr-418, Asp-491, 503–506 (YLDR), Lys-512, and Lys-612 contribute to the AMP site. Residues 651 to 726 (APVLVTVCRA…ALADYVEAAR (76 aa)) enclose the Carrier domain. An O-(pantetheine 4'-phosphoryl)serine modification is found at Ser-685. Residues 787–791 (TGFLG), Arg-814, Arg-824, 854–855 (DK), 880–882 (PAA), 919–920 (TS), Tyr-956, and Lys-960 each bind NADP(+).

Belongs to the ATP-dependent AMP-binding enzyme family. Carboxylic acid reductase subfamily. The cofactor is pantetheine 4'-phosphate.

The enzyme catalyses a carboxylate + ATP + NADPH + H(+) = an aldehyde + AMP + diphosphate + NADP(+). Its function is as follows. Catalyzes the ATP- and NADPH-dependent reduction of carboxylic acids to the corresponding aldehydes. Catalyzes the reduction of a wide range of aliphatic fatty acids (C6-C18) into their corresponding aldehydes. Can also reduce benzoate to benzaldehyde. Has a preference for NADPH over NADH as the electron donor. This Mycobacterium marinum (strain ATCC BAA-535 / M) protein is Carboxylic acid reductase.